Reading from the N-terminus, the 302-residue chain is Probable protein ABIL4 (302 aa).

2 disordered regions span residues Pro151 to Ala179 and Leu220 to Phe256. The segment covering Ala161 to Asp170 has biased composition (polar residues).

It belongs to the ABI family. Binds SCAR.

The protein resides in the cytoplasm. The protein localises to the cytoskeleton. In terms of biological role, involved in regulation of actin and microtubule organization. Part of a WAVE complex that activates the Arp2/3 complex. In Oryza sativa subsp. japonica (Rice), this protein is Probable protein ABIL4.